Reading from the N-terminus, the 37-residue chain is Cytochrome b6-f complex subunit 5 (37 aa).

Residues 5–25 (ILLGIVLGMVLVTLAGLFVAA) traverse the membrane as a helical segment.

Belongs to the PetG family. The 4 large subunits of the cytochrome b6-f complex are cytochrome b6, subunit IV (17 kDa polypeptide, PetD), cytochrome f and the Rieske protein, while the 4 small subunits are PetG, PetL, PetM and PetN. The complex functions as a dimer.

It localises to the cellular thylakoid membrane. Component of the cytochrome b6-f complex, which mediates electron transfer between photosystem II (PSII) and photosystem I (PSI), cyclic electron flow around PSI, and state transitions. PetG is required for either the stability or assembly of the cytochrome b6-f complex. The chain is Cytochrome b6-f complex subunit 5 from Synechococcus sp. (strain JA-3-3Ab) (Cyanobacteria bacterium Yellowstone A-Prime).